Reading from the N-terminus, the 174-residue chain is Bifunctional protein PyrR (174 aa).

Substrate is bound by residues 38 to 39 (SG), 95 to 103 (DDVLATGRT), and Arg-128. Positions 91 to 103 (ILLVDDVLATGRT) match the PRPP-binding motif.

Belongs to the purine/pyrimidine phosphoribosyltransferase family. PyrR subfamily.

It carries out the reaction UMP + diphosphate = 5-phospho-alpha-D-ribose 1-diphosphate + uracil. Regulates the transcription of the pyrimidine nucleotide (pyr) operon in response to exogenous pyrimidines. Its function is as follows. Also displays a weak uracil phosphoribosyltransferase activity which is not physiologically significant. In Ralstonia nicotianae (strain ATCC BAA-1114 / GMI1000) (Ralstonia solanacearum), this protein is Bifunctional protein PyrR.